Here is a 715-residue protein sequence, read N- to C-terminus: Fatty acid oxidation complex subunit alpha (715 aa).

The segment at 1–190 (MIYEGKAITV…KVGAVDAVVA (190 aa)) is enoyl-CoA hydratase/isomerase. Asp-297 provides a ligand contact to substrate. Residues 312 to 715 (HDVKQAAVLG…MAKNGQRFFN (404 aa)) form a 3-hydroxyacyl-CoA dehydrogenase region. NAD(+)-binding positions include Met-325, Asp-344, 401-403 (VVE), Lys-408, and Ser-430. The active-site For 3-hydroxyacyl-CoA dehydrogenase activity is the His-451. Asn-454 contributes to the NAD(+) binding site. Asn-501 and Tyr-660 together coordinate substrate.

In the N-terminal section; belongs to the enoyl-CoA hydratase/isomerase family. It in the C-terminal section; belongs to the 3-hydroxyacyl-CoA dehydrogenase family. In terms of assembly, heterotetramer of two alpha chains (FadB) and two beta chains (FadA).

It carries out the reaction a (3S)-3-hydroxyacyl-CoA + NAD(+) = a 3-oxoacyl-CoA + NADH + H(+). The catalysed reaction is a (3S)-3-hydroxyacyl-CoA = a (2E)-enoyl-CoA + H2O. It catalyses the reaction a 4-saturated-(3S)-3-hydroxyacyl-CoA = a (3E)-enoyl-CoA + H2O. The enzyme catalyses (3S)-3-hydroxybutanoyl-CoA = (3R)-3-hydroxybutanoyl-CoA. It carries out the reaction a (3Z)-enoyl-CoA = a 4-saturated (2E)-enoyl-CoA. The catalysed reaction is a (3E)-enoyl-CoA = a 4-saturated (2E)-enoyl-CoA. Its pathway is lipid metabolism; fatty acid beta-oxidation. Involved in the aerobic and anaerobic degradation of long-chain fatty acids via beta-oxidation cycle. Catalyzes the formation of 3-oxoacyl-CoA from enoyl-CoA via L-3-hydroxyacyl-CoA. It can also use D-3-hydroxyacyl-CoA and cis-3-enoyl-CoA as substrate. This is Fatty acid oxidation complex subunit alpha from Pseudomonas putida (strain ATCC 700007 / DSM 6899 / JCM 31910 / BCRC 17059 / LMG 24140 / F1).